The chain runs to 425 residues: Formyl-CoA:oxalate CoA-transferase (425 aa).

CoA contacts are provided by residues 17-18 (QS), arginine 38, 72-75 (LDTK), 96-98 (NFG), arginine 104, and 136-139 (KVYE). Aspartate 168 acts as the Nucleophile in catalysis. 247-249 (GGQ) contributes to the substrate binding site.

The protein belongs to the CoA-transferase III family. Frc subfamily. As to quaternary structure, homodimer.

The enzyme catalyses formyl-CoA + oxalate = oxalyl-CoA + formate. Its pathway is metabolic intermediate degradation; oxalate degradation; CO(2) and formate from oxalate: step 1/2. Its function is as follows. Involved in the catabolism of oxalate and in the adapatation to low pH via the induction of the oxalate-dependent acid tolerance response (ATR). Catalyzes the transfer of the CoA moiety from formyl-CoA to oxalate. The protein is Formyl-CoA:oxalate CoA-transferase of Rhodopseudomonas palustris (strain HaA2).